The following is a 356-amino-acid chain: Peptide chain release factor 1 (356 aa).

Glutamine 230 is modified (N5-methylglutamine). Residues 279 to 289 show a composition bias toward basic and acidic residues; it reads ALDSARSEARK. The tract at residues 279-299 is disordered; sequence ALDSARSEARKSQVGSGDRSE.

This sequence belongs to the prokaryotic/mitochondrial release factor family. Methylated by PrmC. Methylation increases the termination efficiency of RF1.

Its subcellular location is the cytoplasm. In terms of biological role, peptide chain release factor 1 directs the termination of translation in response to the peptide chain termination codons UAG and UAA. In Caulobacter vibrioides (strain ATCC 19089 / CIP 103742 / CB 15) (Caulobacter crescentus), this protein is Peptide chain release factor 1 (prfA).